Reading from the N-terminus, the 146-residue chain is uncharacterized protein (146 aa).

To E.coli YmfS.

This is an uncharacterized protein from Escherichia coli (strain K12).